A 653-amino-acid chain; its full sequence is Dual specificity protein kinase shkB (653 aa).

The segment at 112–133 (NPNNNNNNSNNTNSSDSNQNYS) is disordered. Positions 174 to 432 (YNREAKLGSG…FAEISKQRIL (259 aa)) constitute a Protein kinase domain. ATP contacts are provided by residues 180–188 (LGSGAFGSV) and lysine 201. Residue aspartate 298 is the Proton acceptor of the active site. An SH2 domain is found at 534–625 (GFMAATSSKN…IKEPFEGGPF (92 aa)).

The protein belongs to the protein kinase superfamily. TKL Ser/Thr protein kinase family. SH2 domain-containing protein kinase subfamily.

The protein localises to the membrane. The enzyme catalyses L-seryl-[protein] + ATP = O-phospho-L-seryl-[protein] + ADP + H(+). It carries out the reaction L-threonyl-[protein] + ATP = O-phospho-L-threonyl-[protein] + ADP + H(+). Functionally, required for proper chemotaxis and phagocytosis; proper spatiotemporal control of F-actin levels in chemotaxing cells. Negative regulator of the PI3K (phosphatidylinositol 3 kinase) pathway. Predominantly phosphorylates serines and threonines and tyrosines at a lower level. The chain is Dual specificity protein kinase shkB (shkB) from Dictyostelium discoideum (Social amoeba).